A 103-amino-acid polypeptide reads, in one-letter code: uncharacterized protein (103 aa).

Its subcellular location is the mitochondrion. This is an uncharacterized protein from Claviceps purpurea (Ergot fungus).